The sequence spans 61 residues: Metallothionein-1H (61 aa).

Methionine 1 bears the N-acetylmethionine mark. Residues 1-29 (MDPNCSCEAGGSCACAGSCKCKKCKCTSC) form a beta region. A divalent metal cation-binding residues include cysteine 5, cysteine 7, cysteine 13, cysteine 15, cysteine 19, cysteine 21, cysteine 24, cysteine 26, cysteine 29, cysteine 33, cysteine 34, cysteine 36, cysteine 37, cysteine 41, cysteine 44, cysteine 48, cysteine 50, and cysteine 57. The alpha stretch occupies residues 30–61 (KKSCCSCCPLGCAKCAQGCICKGASEKCSCCA). Serine 58 carries the post-translational modification Phosphoserine. Residues cysteine 59 and cysteine 60 each coordinate a divalent metal cation.

Belongs to the metallothionein superfamily. Type 1 family. In terms of assembly, monomer.

Metallothioneins have a high content of cysteine residues that bind various heavy metals; these proteins are transcriptionally regulated by both heavy metals and glucocorticoids. The sequence is that of Metallothionein-1H (MT1H) from Homo sapiens (Human).